Reading from the N-terminus, the 367-residue chain is Inactive serine protease 39 (367 aa).

Positions 1-31 are cleaved as a signal peptide; the sequence is MWGSRAQQSGPDRGGACLLAAFLLCFSLLHA. Residues 68-312 enclose the Peptidase S1 domain; sequence IYGGQIAKAE…FSDWIKQKKA (245 aa). Disulfide bonds link Cys-93-Cys-109, Cys-192-Cys-269, Cys-225-Cys-248, and Cys-259-Cys-287.

This sequence belongs to the peptidase S1 family. As to expression, expressed in testis. More specifically, abundantly expressed in the haploid round spermatid.

The protein localises to the cytoplasmic vesicle. The protein resides in the secretory vesicle. Its subcellular location is the acrosome. It localises to the secreted. In terms of biological role, may play an important role in the sperm/egg interaction; released during the acrosome reaction. This is Inactive serine protease 39 (Prss39) from Mus musculus (Mouse).